The chain runs to 590 residues: MELENIVANTVLLKAREGGGGKRKGKSKKWKEILKFPHISQCEDLRRTIDRDYYSLCDKQPIGRLLFRQFCETRPGLECYIQFLDLVAEYEITPDENLGAKGKEIMTKYLTPKSPVFIAQVGQDLVSQTEKKLLQSPCKELFSACAQSVHDYLKGDPFHEYLDSMYFDRFLQWKWLERQPVTKNTFRQYRVLGKGGFGEVCACQVRATGKMYACKRLEKKRIKKRKGESMALNEKQILEKVNSQFVVNLAYAYETKDALCLVLTIMNGGDLKFHIYNMGNPGFEEERALFYAAEILCGLEDLHRENTVYRDLKPENILLDDYGHIRISDLGLAVKIPEGDLIRGRVGTVGYMAPEVLNNQRYGLSPDYWGLGCLIYEMIEGQSPFRGRKEKVKREEVDRRVLETEEVYSSKFSEEAKSICNMLLTKDSKQRLGCQEEGAAEVKRHPFFRNMNFKRLEAGMLDPPFVPDPRAVYCKDVLDIEQFSTVKGVNLDHTDDDFYSKFSTGSVPIPWQNEMIETECFKELNVFGPNGTLSPDLNRSQPPEPPKKGLFHRLFRRQHQSNSKSSPTPKTSCNHRINSNHINSNSTGSS.

Residues 1–185 (MELENIVANT…LERQPVTKNT (185 aa)) form an N-terminal region. Residues 20–39 (GGKRKGKSKKWKEILKFPHI) are interaction with calmodulin. Residues 53 to 171 (YYSLCDKQPI…LDSMYFDRFL (119 aa)) enclose the RGS domain. Ser-136 bears the Phosphoserine mark. The region spanning 186 to 448 (FRQYRVLGKG…AAEVKRHPFF (263 aa)) is the Protein kinase domain. Residues 192-200 (LGKGGFGEV) and Lys-215 contribute to the ATP site. The active-site Proton acceptor is the Asp-311. Positions 388 to 395 (RKEKVKRE) match the Nuclear localization signal motif. One can recognise an AGC-kinase C-terminal domain in the interval 449–514 (RNMNFKRLEA…GSVPIPWQNE (66 aa)). Position 484 is a phosphoserine; by autocatalysis (Ser-484). At Thr-485 the chain carries Phosphothreonine; by autocatalysis. Residues 546 to 565 (PKKGLFHRLFRRQHQSNSKS) form a sufficient for membrane localization region. Residues 557–590 (RQHQSNSKSSPTPKTSCNHRINSNHINSNSTGSS) are disordered. Positions 561–590 (SNSKSSPTPKTSCNHRINSNHINSNSTGSS) are enriched in low complexity. Phosphoserine is present on Ser-579.

The protein belongs to the protein kinase superfamily. AGC Ser/Thr protein kinase family. GPRK subfamily. As to quaternary structure, interacts with ST13 (via the C-terminus 303-319 AA). Interacts with TP53/p53. Interacts with HTR4 (via C-terminus 330-346 AA); this interaction is promoted by 5-HT (serotonin). Interacts with HDAC5. Interacts with GIT1. In terms of processing, autophosphorylated. Autophosphorylation may play a critical role in the regulation of GRK5 kinase activity.

It localises to the cytoplasm. The protein localises to the nucleus. The protein resides in the cell membrane. The catalysed reaction is [G-protein-coupled receptor] + ATP = [G-protein-coupled receptor]-phosphate + ADP + H(+). With respect to regulation, inhibited by calmodulin with an IC(50) of 50 nM. Calmodulin inhibits GRK5 association with receptor and phospholipid. Its function is as follows. Serine/threonine kinase that phosphorylates preferentially the activated forms of a variety of G-protein-coupled receptors (GPCRs). Such receptor phosphorylation initiates beta-arrestin-mediated receptor desensitization, internalization, and signaling events leading to their down-regulation. Phosphorylates a variety of GPCRs, including adrenergic receptors, muscarinic acetylcholine receptors (more specifically Gi-coupled M2/M4 subtypes), dopamine receptors and opioid receptors. In addition to GPCRs, also phosphorylates various substrates: Hsc70-interacting protein/ST13, TP53/p53, HDAC5, and arrestin-1/ARRB1. Phosphorylation of ARRB1 by GRK5 inhibits G-protein independent MAPK1/MAPK3 signaling downstream of 5HT4-receptors. Phosphorylation of HDAC5, a repressor of myocyte enhancer factor 2 (MEF2) leading to nuclear export of HDAC5 and allowing MEF2-mediated transcription. Phosphorylation of TP53/p53, a crucial tumor suppressor, inhibits TP53/p53-mediated apoptosis. Phosphorylation of ST13 regulates internalization of the chemokine receptor. Phosphorylates rhodopsin (RHO) (in vitro) and a non G-protein-coupled receptor, LRP6 during Wnt signaling (in vitro). In Mus musculus (Mouse), this protein is G protein-coupled receptor kinase 5 (Grk5).